The chain runs to 141 residues: Large ribosomal subunit protein uL11 (141 aa).

Belongs to the universal ribosomal protein uL11 family. In terms of assembly, part of the ribosomal stalk of the 50S ribosomal subunit. Interacts with L10 and the large rRNA to form the base of the stalk. L10 forms an elongated spine to which L12 dimers bind in a sequential fashion forming a multimeric L10(L12)X complex. Post-translationally, one or more lysine residues are methylated.

Forms part of the ribosomal stalk which helps the ribosome interact with GTP-bound translation factors. This Geobacillus sp. (strain WCH70) protein is Large ribosomal subunit protein uL11.